A 979-amino-acid chain; its full sequence is Translation initiation factor IF-2 (979 aa).

A disordered region spans residues 68-386; that stretch reads VKQKQGTPAS…DKRDAASRAA (319 aa). Basic and acidic residues-rich tracts occupy residues 102-179, 217-229, and 260-273; these read QDMR…KPEE, EMEKKEDTEEVFR, and TKEDRQREQNDADG. Residues 317–326 show a composition bias toward polar residues; it reads RPAQQQSNAS. The segment covering 347–356 has biased composition (basic and acidic residues); that stretch reads DVQRQVKETL. In terms of domain architecture, tr-type G spans 478–646; that stretch reads ARPPIVTVMG…KVLLEADILE (169 aa). The tract at residues 487–494 is G1; it reads GHVDHGKT. Position 487-494 (487-494) interacts with GTP; sequence GHVDHGKT. Residues 512-516 are G2; that stretch reads GITQH. Positions 534–537 are G3; that stretch reads DTPG. GTP-binding positions include 534–538 and 588–591; these read DTPGH and NKID. Positions 588–591 are G4; sequence NKID. Positions 624-626 are G5; sequence SAK.

It belongs to the TRAFAC class translation factor GTPase superfamily. Classic translation factor GTPase family. IF-2 subfamily.

Its subcellular location is the cytoplasm. Its function is as follows. One of the essential components for the initiation of protein synthesis. Protects formylmethionyl-tRNA from spontaneous hydrolysis and promotes its binding to the 30S ribosomal subunits. Also involved in the hydrolysis of GTP during the formation of the 70S ribosomal complex. The protein is Translation initiation factor IF-2 of Porphyromonas gingivalis (strain ATCC BAA-308 / W83).